We begin with the raw amino-acid sequence, 719 residues long: Solute carrier family 15 member 2 (719 aa).

At 1–43 the chain is on the cytoplasmic side; it reads MGKMKDKDVDAEKYEKAQRSPKLCGTNYPVSIAFIVVNEFCER. A helical transmembrane segment spans residues 44-61; the sequence is FSYYGMKAVLTLYFMNYL. Over 62 to 69 the chain is Extracellular; sequence HWDKNLST. Residue Asn66 is glycosylated (N-linked (GlcNAc...) asparagine). Residues 70–90 form a helical membrane-spanning segment; that stretch reads AIYHAFSGLCYFTPLLGALIA. Over 91 to 99 the chain is Cytoplasmic; sequence DSWLGKFKT. The helical transmembrane segment at 100–120 threads the bilayer; it reads IIYLSIVYVIGHVVKSVGAIP. Residues 121–125 are Extracellular-facing; sequence DVGDS. Residues 126 to 146 form a helical membrane-spanning segment; that stretch reads TVHIALSMVGLGLIALGTGGI. Topologically, residues 147–169 are cytoplasmic; that stretch reads KPCVAAFGGDQFDEDNIDERRKF. A helical membrane pass occupies residues 170–190; sequence FSIFYMSINAGSVLSTIITPI. At 191–201 the chain is on the extracellular side; that stretch reads LRGDVQCFGGD. Residues 202-222 form a helical membrane-spanning segment; sequence CYALAFGVPAALMVIALVVFI. At 223-280 the chain is on the cytoplasmic side; sequence SGSGLYKKSPPEGNVLVRVCKCIGFAISNRWTNSKKSPKRSHWLDWAEEKYSKRLIQE. The helical transmembrane segment at 281-301 threads the bilayer; sequence IKMVCRVLVLYIPLPMFWALF. The Extracellular portion of the chain corresponds to 302–334; it reads DQQGSRWTLQATRMNMDFGGGFIIKPDQMQMLN. Residues 335-355 form a helical membrane-spanning segment; the sequence is ALLILVFIPIFDMGIYPLVGL. Over 356 to 367 the chain is Cytoplasmic; the sequence is CRIKLTPLKKMA. The chain crosses the membrane as a helical span at residues 368–388; sequence TGMILAALAFCAATAVEVYVI. Residues 389-594 lie on the Extracellular side of the membrane; the sequence is KTVVEPPPAK…QANNIHIGWQ (206 aa). Residues 389-594 form an extracellular domain (ECD) region; that stretch reads KTVVEPPPAK…QANNIHIGWQ (206 aa). Asn481, Asn513, and Asn532 each carry an N-linked (GlcNAc...) asparagine glycan. The helical transmembrane segment at 595–615 threads the bilayer; it reads IPQYVFLTAGEVMFSITGLEF. Over 616 to 626 the chain is Cytoplasmic; the sequence is SYSQAPASMKS. A helical transmembrane segment spans residues 627–647; sequence VLQAGWLMTVAFGNVIVLIVA. The Extracellular segment spans residues 648–657; the sequence is EGAGMEQWVE. The chain crosses the membrane as a helical span at residues 658–678; it reads FLLFAALLVAVSIIFSIMAYF. Residues 679 to 719 are Cytoplasmic-facing; that stretch reads YTYVDPDQLDKLFKEDGDGGKVESSKKDELSLGDMPKQTKM. The span at 695 to 708 shows a compositional bias: basic and acidic residues; it reads GDGGKVESSKKDEL. A disordered region spans residues 695–719; it reads GDGGKVESSKKDELSLGDMPKQTKM.

Belongs to the major facilitator superfamily. Proton-dependent oligopeptide transporter (POT/PTR) (TC 2.A.17) family. In terms of tissue distribution, expressed in kidney, brain and gut. Also expressed weakly in eye, gill and skeletal muscle.

The protein resides in the apical cell membrane. It is found in the cytoplasmic vesicle. The protein localises to the phagosome membrane. Its subcellular location is the cell membrane. It carries out the reaction a dipeptide(out) + 2 H(+)(out) = a dipeptide(in) + 2 H(+)(in). The catalysed reaction is N-acetyl-D-muramoyl-L-alanyl-D-isoglutamine(out) + 3 H(+)(out) = N-acetyl-D-muramoyl-L-alanyl-D-isoglutamine(in) + 3 H(+)(in). The enzyme catalyses glycyl-L-leucine(out) + 2 H(+)(out) = glycyl-L-leucine(in) + 2 H(+)(in). It catalyses the reaction glycyl-L-lysine(out) + 2 H(+)(out) = glycyl-L-lysine(in) + 2 H(+)(in). It carries out the reaction glycyl-L-glutamate(out) + 3 H(+)(out) = glycyl-L-glutamate(in) + 3 H(+)(in). The catalysed reaction is L-alanyl-L-alanine(out) + 2 H(+)(out) = L-alanyl-L-alanine(in) + 2 H(+)(in). The enzyme catalyses an L-amino acid tripeptide(out) + 2 H(+)(out) = an L-amino acid tripeptide(in) + 2 H(+)(in). It catalyses the reaction carnosine(out) + 2 H(+)(out) = carnosine(in) + 2 H(+)(in). Functionally, proton-coupled amino-acid transporter that transports oligopeptides of 2 to 4 amino acids with a preference for dipeptides. Transports neutral and anionic dipeptides with a proton to peptide stoichiometry of 2:1 or 3:1. This Danio rerio (Zebrafish) protein is Solute carrier family 15 member 2.